A 591-amino-acid chain; its full sequence is Aspartate--tRNA(Asp/Asn) ligase (591 aa).

E176 lines the L-aspartate pocket. The tract at residues 200-203 (QLFK) is aspartate. R222 contributes to the L-aspartate binding site. ATP is bound by residues 222–224 (RDE) and Q231. Position 450 (H450) interacts with L-aspartate. ATP is bound at residue E484. R491 provides a ligand contact to L-aspartate. ATP is bound at residue 536–539 (GLDR).

This sequence belongs to the class-II aminoacyl-tRNA synthetase family. Type 1 subfamily. In terms of assembly, homodimer.

The protein localises to the cytoplasm. It catalyses the reaction tRNA(Asx) + L-aspartate + ATP = L-aspartyl-tRNA(Asx) + AMP + diphosphate. Functionally, aspartyl-tRNA synthetase with relaxed tRNA specificity since it is able to aspartylate not only its cognate tRNA(Asp) but also tRNA(Asn). Reaction proceeds in two steps: L-aspartate is first activated by ATP to form Asp-AMP and then transferred to the acceptor end of tRNA(Asp/Asn). The sequence is that of Aspartate--tRNA(Asp/Asn) ligase from Bacillus thuringiensis (strain Al Hakam).